We begin with the raw amino-acid sequence, 211 residues long: Transcription factor ces-2 (211 aa).

A compositionally biased stretch (low complexity) spans Val-83–Ser-101. Disordered stretches follow at residues Val-83–Glu-152 and Asn-184–Val-211. Over residues Pro-111–Glu-152 the composition is skewed to basic and acidic residues. A bZIP domain is found at Asp-116 to Lys-179. Residues Arg-122–Lys-140 form a basic motif region. The interval Ile-144–Leu-172 is leucine-zipper. Residues Glu-190–Ser-200 show a composition bias toward low complexity. A compositionally biased stretch (basic and acidic residues) spans Asn-201–Val-211.

This sequence belongs to the bZIP family. As to quaternary structure, interacts with NFIL3 transcription factor homolog atf-2.

Its subcellular location is the nucleus. Functionally, transcription factor. Required to activate programmed cell death in the sister cells of the serotoninergic neurosecretory motor (NSM) neurons. Negatively regulates the activity of ces-1 which in turn negatively regulates the activities of cell-killing genes. Binds to the DNA sequence 5'-RTTACGTAAY-3'. Involved in the development of the excretory duct cell, by positively modulating embryonic transcription of putative transcription factor lin-48, acting in concert with NFIL3 transcription factor homolog atf-2. Positively modulates expression of neuropeptide pigment dispersing factor homologs pdf-1 and pdf-2. This chain is Transcription factor ces-2 (ces-2), found in Caenorhabditis elegans.